We begin with the raw amino-acid sequence, 145 residues long: UPF0260 protein VS_0923 (145 aa).

This sequence belongs to the UPF0260 family.

The chain is UPF0260 protein VS_0923 from Vibrio atlanticus (strain LGP32) (Vibrio splendidus (strain Mel32)).